The primary structure comprises 406 residues: MIVQPKVRGFICTTAHPEGCARHVGEWINYAKQEPSLTGGPQKVLIIGASTGFGLASRIVAAFGAGAKTIGVFFERPASGKRTASPGWYNTAAFEKTALAAGLYAKSINGDAFSDEIKQQTIDLIQKDWQGGVDLVIYSIASPRRVHPRTGEIFNSVLKPIGQTYHNKTVDVMTGEVSPVSIEPATEKEIRDTEAVMGGDDWALWINALFKYNCLAEGVKTVAFTYIGPELTHAVYRNGTIGRAKLHLEKTARELDTQLESALSGQALISVNKALVTQASAAIPVVPLYISLLYKIMKEKNIHEGCIEQMWRLFKERLYSNQNIPTDSEGRIRIDDWEMREDVQAEIKRLWESINTGNVETVSDIAGYREDFYKLFGFGLNGIDYERGVEIEKAIPSITVTPENPE.

NAD(+) is bound by residues 48–53 (GASTGF), 74–75 (FE), 111–112 (DA), and 140–141 (IA). A substrate-binding site is contributed by Tyr-226. Tyr-236 (proton donor) is an active-site residue. Residues Lys-245 and 275 to 277 (LVT) each bind NAD(+).

It belongs to the TER reductase family. As to quaternary structure, monomer.

It carries out the reaction a 2,3-saturated acyl-[ACP] + NAD(+) = a (2E)-enoyl-[ACP] + NADH + H(+). It participates in lipid metabolism; fatty acid biosynthesis. Functionally, involved in the final reduction of the elongation cycle of fatty acid synthesis (FAS II). Catalyzes the reduction of a carbon-carbon double bond in an enoyl moiety that is covalently linked to an acyl carrier protein (ACP). This Coxiella burnetii (strain RSA 331 / Henzerling II) protein is Enoyl-[acyl-carrier-protein] reductase [NADH].